Here is a 150-residue protein sequence, read N- to C-terminus: Leukotriene C4 synthase (150 aa).

Over 1–6 (MKDEVA) the chain is Cytoplasmic. A helical transmembrane segment spans residues 7–27 (LLATVTLLGVLLQAYFSLQVI). The Lumenal portion of the chain corresponds to 28-48 (RARRAHRVSPPLTTGPPEFER). Arg-30 provides a ligand contact to glutathione. Residue Arg-31 is the Proton donor of the active site. Residue Ser-36 is modified to Phosphoserine. The helical transmembrane segment at 49 to 69 (VYRAQVNCSEYFPLFLATLWV) threads the bilayer. Glutathione contacts are provided by residues 51–55 (RAQVN) and 58–59 (EY). At 70-73 (AGVY) the chain is on the cytoplasmic side. The helical transmembrane segment at 74 to 94 (FHEGAAALCGLVYLFTRLRYF) threads the bilayer. A glutathione-binding site is contributed by 93 to 97 (YFWGY). The Lumenal segment spans residues 95-104 (WGYARSAQLR). The active-site Proton acceptor is the Arg-104. The chain crosses the membrane as a helical span at residues 105-124 (LAPLYASARALWLLLALATL). The Cytoplasmic portion of the chain corresponds to 125 to 150 (GLLAHFLPAAARAALLRLLRALLRTA).

The protein belongs to the MAPEG family. Homotrimer. Interacts with ALOX5AP and ALOX5. Phosphorylation at Ser-36 by RPS6KB1 inhibits the leukotriene-C4 synthase activity.

The protein localises to the nucleus outer membrane. Its subcellular location is the endoplasmic reticulum membrane. It is found in the nucleus membrane. It catalyses the reaction leukotriene C4 = leukotriene A4 + glutathione. The enzyme catalyses (13S,14S)-epoxy-(4Z,7Z,9E,11E,16Z,19Z)-docosahexaenoate + glutathione = (13R)-S-glutathionyl-(14S)-hydroxy-(4Z,7Z,9E,11E,16Z,19Z)-docosahexaenoate. The protein operates within lipid metabolism; leukotriene C4 biosynthesis. With respect to regulation, inhibited by MK886. In terms of biological role, catalyzes the conjugation of leukotriene A4 with reduced glutathione (GSH) to form leukotriene C4 with high specificity. Can also catalyze the transfer of a glutathionyl group from glutathione (GSH) to 13(S),14(S)-epoxy-docosahexaenoic acid to form maresin conjugate in tissue regeneration 1 (MCTR1), a bioactive lipid mediator that possess potent anti-inflammatory and proresolving actions. This Cavia porcellus (Guinea pig) protein is Leukotriene C4 synthase (LTC4S).